A 1478-amino-acid chain; its full sequence is DNA-directed RNA polymerase subunit beta' (1478 aa).

3 residues coordinate Mg(2+): Asp535, Asp537, and Asp539. Positions 1034, 1109, 1116, and 1119 each coordinate Zn(2+).

This sequence belongs to the RNA polymerase beta' chain family. The RNAP catalytic core consists of 2 alpha, 1 beta, 1 beta' and 1 omega subunit. When a sigma factor is associated with the core the holoenzyme is formed, which can initiate transcription. Requires Mg(2+) as cofactor. It depends on Zn(2+) as a cofactor.

It carries out the reaction RNA(n) + a ribonucleoside 5'-triphosphate = RNA(n+1) + diphosphate. In terms of biological role, DNA-dependent RNA polymerase catalyzes the transcription of DNA into RNA using the four ribonucleoside triphosphates as substrates. This Mycoplasmopsis agalactiae (strain NCTC 10123 / CIP 59.7 / PG2) (Mycoplasma agalactiae) protein is DNA-directed RNA polymerase subunit beta'.